Reading from the N-terminus, the 103-residue chain is Large ribosomal subunit protein bL21 (103 aa).

The protein belongs to the bacterial ribosomal protein bL21 family. Part of the 50S ribosomal subunit. Contacts protein L20.

Its function is as follows. This protein binds to 23S rRNA in the presence of protein L20. This chain is Large ribosomal subunit protein bL21, found in Chromobacterium violaceum (strain ATCC 12472 / DSM 30191 / JCM 1249 / CCUG 213 / NBRC 12614 / NCIMB 9131 / NCTC 9757 / MK).